Consider the following 648-residue polypeptide: Centrosomal protein of 63 kDa-B (648 aa).

2 coiled-coil regions span residues 19-188 (DSCE…QSHN) and 222-555 (EEEL…DAAS). Serine 559 is modified (phosphoserine; by atm and atr). Residues 611–644 (FLQEEEQRSHELLQRLNAHIEELKQESQRTVEHF) are a coiled coil.

It belongs to the CEP63 family. Post-translationally, phosphorylation at Ser-559 by atm and atr promotes its delocalization from the centrosome and impairs its ability to promote centrosome dependent spindle assembly.

The protein localises to the cytoplasm. The protein resides in the cytoskeleton. It is found in the microtubule organizing center. Its subcellular location is the centrosome. It localises to the centriole. Its function is as follows. Required for normal spindle assembly. Plays a key role in mother-centriole-dependent centriole duplication. Plays a role in DNA damage response. Following DNA damage, such as double-strand breaks (DSBs), is removed from centrosomes; this leads to the inactivation of spindle assembly and delay in mitotic progression. This Xenopus laevis (African clawed frog) protein is Centrosomal protein of 63 kDa-B (cep63-b).